A 2729-amino-acid polypeptide reads, in one-letter code: 3-methylorcinaldehyde synthase (2729 aa).

The N-terminal acylcarrier protein transacylase domain (SAT) stretch occupies residues 99-238; it reads LPAALLIPLA…GTISNLTRQL (140 aa). The segment covering 361 to 373 has biased composition (polar residues); sequence SLASTVDINSGNG. Residues 361–391 are disordered; it reads SLASTVDINSGNGKTRRVKPADAQSSANSTH. The Ketosynthase family 3 (KS3) domain maps to 397–828; that stretch reads DTDIAIVGMS…GSNASAVLVQ (432 aa). Residues Cys571, His706, and His748 each act as for beta-ketoacyl synthase activity in the active site. The malonyl-CoA:ACP transacylase (MAT) domain stretch occupies residues 942-1230; it reads FGGQVSCFVG…FLEAGTNSSV (289 aa). Ser1029 functions as the For acyl/malonyl transferase activity in the catalytic mechanism. Residues 1345–1479 are N-terminal hotdog fold; sequence ETILTFHSSD…GTVAFKNPGD (135 aa). Residues 1345–1669 enclose the PKS/mFAS DH domain; the sequence is ETILTFHSSD…YVKIARPSME (325 aa). The segment at 1374-1665 is product template (PT) domain; the sequence is KQLLRGHMTL…LGIAYVKIAR (292 aa). His1380 (proton acceptor; for dehydratase activity) is an active-site residue. The interval 1513–1669 is C-terminal hotdog fold; it reads DEMLGNQSIY…YVKIARPSME (157 aa). Asp1575 functions as the Proton donor; for dehydratase activity in the catalytic mechanism. Residues 1682-1701 are compositionally biased toward low complexity; it reads AGGKTTPQTATKPAAAPVVA. The interval 1682–1726 is disordered; the sequence is AGGKTTPQTATKPAAAPVVADHTPRTTESASTVNGVNLDDRKPEG. Over residues 1707–1716 the composition is skewed to polar residues; that stretch reads TTESASTVNG. A Carrier domain is found at 1750–1824; it reads QDMIARVKAV…GLLQCVAGAL (75 aa). Ser1784 carries the post-translational modification O-(pantetheine 4'-phosphoryl)serine. A compositionally biased stretch (low complexity) spans 1835–1868; that stretch reads TLTASSDSGINSAKSSILSGTSTSTSTGTTDTGS. The disordered stretch occupies residues 1835-1874; that stretch reads TLTASSDSGINSAKSSILSGTSTSTSTGTTDTGSDVGQSM. Positions 2086–2254 are methyltransferase (C-MeT) domain; it reads EINPLRIMET…GYVDWTEGMT (169 aa). Residues 2344-2599 are reductase (R) domain; that stretch reads ITGGTGGLGA…GWTPADYVAR (256 aa).

Its pathway is secondary metabolite biosynthesis; terpenoid biosynthesis. Its function is as follows. Non-reducing polyketide synthase; part of the gene cluster that mediates the biosynthesis of xenovulene A, an unusual meroterpenoid that has potent inhibitory effects on the human gamma-aminobutyrate A (GABAA) benzodiazepine receptor. The first step of xenovulene A biosynthesis is the biosynthesis of 3-methylorcinaldehyde performed by the non-reducing polyketide synthase aspks1. The salicylate hydroxylase asL1 then catalyzes the oxidative dearomatization of 3-methylorcinaldehyde to yield a dearomatized hydroxycyclohexadione. The 2-oxoglutarate-dependent dioxygenase asL3 further catalyzes the oxidative ring expansion to provide the first tropolone metabolite. The cytochrome P450 monooxygenase asR2 allows the synthesis of tropolone hemiacetal. In parallel, a previously unrecognised class of terpene cyclase, asR6, produces alpha-humulene from farnesylpyrophosphate (FPP). The putative Diels-Alderase asR5 probably catalyzes the formation of the tropolone-humulene skeleton by linking humulene and the polyketide moiety. Oxidative-ring contractions catalyzed by asL4 and asL6 then processively remove carbon atoms from the polyketide to yield xenovulene A. This Sarocladium schorii (Acremonium strictum (strain IMI 501407)) protein is 3-methylorcinaldehyde synthase.